The following is a 141-amino-acid chain: MSENVMTLQVITPAGMIYDHHANYITARTTNGEIGILPNMISTIAGLEIDELKVRRPDDETHVDYIAVNGGIIEIKDSLVTIVADSAERNRDIDVSRAERAKIRAEKALEVAKAEKKSDEINRAEVALHRALNRLNVSSHR.

This sequence belongs to the ATPase epsilon chain family. As to quaternary structure, F-type ATPases have 2 components, CF(1) - the catalytic core - and CF(0) - the membrane proton channel. CF(1) has five subunits: alpha(3), beta(3), gamma(1), delta(1), epsilon(1). CF(0) has three main subunits: a, b and c.

It localises to the cell membrane. In terms of biological role, produces ATP from ADP in the presence of a proton gradient across the membrane. The protein is ATP synthase epsilon chain of Lactococcus lactis subsp. lactis (strain IL1403) (Streptococcus lactis).